A 625-amino-acid polypeptide reads, in one-letter code: Ankyrin repeat domain-containing protein oryK (625 aa).

ANK repeat units lie at residues 1–27 (MDIY…DVDG), 31–60 (DGKT…GRGP), 62–89 (NPSL…NAER), 90–119 (EHRS…EYQD), 162–195 (FFDY…DVNC), 202–232 (QFET…DLTI), 500–530 (DTRC…NVNF), 534–562 (SDRT…DIDL), and 568–598 (EGRT…DFSI).

It participates in secondary metabolite biosynthesis. Ankyrin repeat domain-containing protein; part of the gene cluster that mediates the biosynthesis of oryzines, natural products with an unusual maleidride backbone. The two subunits of the fungal fatty acid synthase oryfasA and oryfasB probably form octenoic acid. This fatty acid is most likely activated by the acyl-CoA ligase oryP to give octenyl-CoA before the citrate synthase-like protein oryE catalyzes condensation with oxaloacetate to form tricarboxylic acid. The next steps of the pathways are conjectural, but a favorite possible route has been proposed, beginning with decarboxylation and concomitant dehydration by the decarboxylase oryM, followed by tautomerization, which may lead to the production of a diene intermediate. Reduction of this diene intermediate could give the known metabolite piliformic acid. On the pathway to oryzine B and oryzine A, however, hydroxylation of the diene by the alpha-ketoglutarate-dependent dioxygenase oryG and lactonisation by the lactonohydrolases oryH or oryL could give oryzine B directly. Finally, enoyl reduction by the dehydrogenase oryD would then convert oryzine B into oryzine A. This chain is Ankyrin repeat domain-containing protein oryK, found in Aspergillus oryzae (strain ATCC 42149 / RIB 40) (Yellow koji mold).